The chain runs to 160 residues: SsrA-binding protein (160 aa).

Residues 136–160 are disordered; it reads KRDTMRERDSNRELQRAVRNKGKED.

This sequence belongs to the SmpB family.

The protein localises to the cytoplasm. Its function is as follows. Required for rescue of stalled ribosomes mediated by trans-translation. Binds to transfer-messenger RNA (tmRNA), required for stable association of tmRNA with ribosomes. tmRNA and SmpB together mimic tRNA shape, replacing the anticodon stem-loop with SmpB. tmRNA is encoded by the ssrA gene; the 2 termini fold to resemble tRNA(Ala) and it encodes a 'tag peptide', a short internal open reading frame. During trans-translation Ala-aminoacylated tmRNA acts like a tRNA, entering the A-site of stalled ribosomes, displacing the stalled mRNA. The ribosome then switches to translate the ORF on the tmRNA; the nascent peptide is terminated with the 'tag peptide' encoded by the tmRNA and targeted for degradation. The ribosome is freed to recommence translation, which seems to be the essential function of trans-translation. In Pseudomonas putida (strain GB-1), this protein is SsrA-binding protein.